The primary structure comprises 338 residues: uncharacterized protein (338 aa).

This is an uncharacterized protein from Bacillus subtilis (strain 168).